The following is a 91-amino-acid chain: Sec-independent protein translocase protein TatA (91 aa).

Residues 1-21 traverse the membrane as a helical segment; sequence MGIFDWKHWIVILIVVVLVFG. The tract at residues 42–91 is disordered; the sequence is AMNDDDKPAEQPAPQPQQAQAAPQGSPLNQPHTIDAQAHKVDEPIRKDQV. Low complexity predominate over residues 51–65; the sequence is EQPAPQPQQAQAAPQ. Basic and acidic residues predominate over residues 78-91; sequence QAHKVDEPIRKDQV.

It belongs to the TatA/E family. In terms of assembly, the Tat system comprises two distinct complexes: a TatABC complex, containing multiple copies of TatA, TatB and TatC subunits, and a separate TatA complex, containing only TatA subunits. Substrates initially bind to the TatABC complex, which probably triggers association of the separate TatA complex to form the active translocon.

The protein resides in the cell inner membrane. Part of the twin-arginine translocation (Tat) system that transports large folded proteins containing a characteristic twin-arginine motif in their signal peptide across membranes. TatA could form the protein-conducting channel of the Tat system. The polypeptide is Sec-independent protein translocase protein TatA (Pseudomonas savastanoi pv. phaseolicola (strain 1448A / Race 6) (Pseudomonas syringae pv. phaseolicola (strain 1448A / Race 6))).